Consider the following 356-residue polypeptide: A-type ATP synthase subunit C (356 aa).

It belongs to the V-ATPase V0D/AC39 subunit family. As to quaternary structure, has multiple subunits with at least A(3), B(3), C, D, E, F, H, I and proteolipid K(x).

It is found in the cell membrane. In terms of biological role, component of the A-type ATP synthase that produces ATP from ADP in the presence of a proton gradient across the membrane. The chain is A-type ATP synthase subunit C from Thermoplasma acidophilum (strain ATCC 25905 / DSM 1728 / JCM 9062 / NBRC 15155 / AMRC-C165).